A 689-amino-acid chain; its full sequence is Beta-adrenergic receptor kinase 1 (689 aa).

The segment at 1–190 (MADLEAVLAD…ELNIHLTMND (190 aa)) is N-terminal. One can recognise an RGS domain in the interval 54–175 (TFEKIFSQKL…IESDKFTRFC (122 aa)). The Protein kinase domain occupies 191 to 453 (FSVHRIIGRG…AQEVKESPFF (263 aa)). Residues 197 to 205 (IGRGGFGEV) and Lys220 contribute to the ATP site. Asp317 functions as the Proton acceptor in the catalytic mechanism. The 68-residue stretch at 454-521 (RSLDWQMVFL…TISERWQQEV (68 aa)) folds into the AGC-kinase C-terminal domain. The region spanning 558-652 (DCIMHGYMSK…WKKELRDAYR (95 aa)) is the PH domain. Ser670 carries the phosphoserine modification.

It belongs to the protein kinase superfamily. AGC Ser/Thr protein kinase family. GPRK subfamily. As to quaternary structure, interacts with the heterodimer formed by GNB1 and GNG2. Interacts with GIT1. Interacts with, and phosphorylates chemokine-stimulated CCR5. Interacts with ARRB1. Interacts with LPAR1 and LPAR2. Interacts with RALA in response to LPAR1 activation. ADRBK1 and RALA mutually inhibit each other's binding to LPAR1. Interacts with ADRB2. As to expression, expressed in peripheral blood leukocytes.

It localises to the cytoplasm. Its subcellular location is the cell membrane. The protein localises to the postsynapse. The protein resides in the presynapse. The enzyme catalyses [beta-adrenergic receptor] + ATP = [beta-adrenergic receptor]-phosphate + ADP + H(+). With respect to regulation, in contrast to other AGC family kinases, the catalytic activity is solely regulated by the binding of substrates and ligands, not by phosphorylation of the kinase domain. In terms of biological role, specifically phosphorylates the agonist-occupied form of the beta-adrenergic and closely related receptors, probably inducing a desensitization of them. Key regulator of LPAR1 signaling. Competes with RALA for binding to LPAR1 thus affecting the signaling properties of the receptor. Desensitizes LPAR1 and LPAR2 in a phosphorylation-independent manner. Positively regulates ciliary smoothened (SMO)-dependent Hedgehog (Hh) signaling pathway by facilitating the trafficking of SMO into the cilium and the stimulation of SMO activity. Inhibits relaxation of airway smooth muscle in response to blue light. This chain is Beta-adrenergic receptor kinase 1, found in Homo sapiens (Human).